Here is a 247-residue protein sequence, read N- to C-terminus: Myeloid leukemia factor 2 (247 aa).

Residues 122-247 (ETSEMRSAPG…PSRQSRRYDW (126 aa)) are disordered. Basic and acidic residues predominate over residues 134-144 (RETRRTVRDSD). The span at 154–169 (HHIRDRAHILQRSRNH) shows a compositional bias: basic residues. Basic and acidic residues predominate over residues 170–179 (RTGDQEERQD). Positions 182–192 (NLDESEAAAFD) are enriched in acidic residues. The segment covering 193–225 (DEWRRETSRYRQQRPLEFRRHEASVGGGRRAEG) has biased composition (basic and acidic residues). Residues Ser216, Ser237, and Ser239 each carry the phosphoserine modification.

Belongs to the MLF family.

The protein resides in the cytoplasm. It is found in the nucleus. This Mus musculus (Mouse) protein is Myeloid leukemia factor 2 (Mlf2).